The primary structure comprises 165 residues: V-type proton ATPase 16 kDa proteolipid subunit (165 aa).

At 1–10 the chain is on the lumenal side; sequence MSSVFSGDET. A helical transmembrane segment spans residues 11–33; the sequence is APFFGFLGAASALIFSCMGAAYG. At 34 to 55 the chain is on the cytoplasmic side; sequence TAKSGVGVASMGVMRPELVMKS. Residues 56–76 form a helical membrane-spanning segment; it reads IVPVVMAGVLGIYGLIIAVII. Residues 77-95 lie on the Lumenal side of the membrane; the sequence is STGINPKAKPYYLFDGYAH. Residues 96–117 traverse the membrane as a helical segment; the sequence is LSSGLACGLAGLAAGMAIGIVG. Residues 118-129 lie on the Cytoplasmic side of the membrane; that stretch reads DAGVRANAQQPK. Residues 130–155 form a helical membrane-spanning segment; the sequence is LFVGMILILIFAEALALYGLIVGIIL. At 156-165 the chain is on the lumenal side; that stretch reads SSRAGQSRAD.

It belongs to the V-ATPase proteolipid subunit family. As to quaternary structure, V-ATPase is a heteromultimeric enzyme composed of a peripheral catalytic V1 complex (main components: subunits A, B, C, D, E, and F) attached to an integral membrane V0 proton pore complex (main component: the proteolipid protein; which is present as a hexamer that forms the proton-conducting pore).

The protein resides in the vacuole membrane. Proton-conducting pore forming subunit of the membrane integral V0 complex of vacuolar ATPase. V-ATPase is responsible for acidifying a variety of intracellular compartments in eukaryotic cells. The protein is V-type proton ATPase 16 kDa proteolipid subunit (VATP-P1) of Oryza sativa subsp. indica (Rice).